Here is a 183-residue protein sequence, read N- to C-terminus: MSIGRVVVLTGPSGVGKGTLLKAILSQHPEAFLSISATTRSPRPGEVDGQHYYFLSREEFQTKIAEQEFLEWAEFAGNLYGTPRSPVIEQVNLGRTVILEIELEGARQVRKTLPSARQVMLLPPSVEELERRIRERATEDEAAIARRLLQAQTEIGAAKEFDRCVINDQLDTAITALEAAIFS.

The Guanylate kinase-like domain maps to 4–182; the sequence is GRVVVLTGPS…AITALEAAIF (179 aa). ATP is bound at residue 11-18; that stretch reads GPSGVGKG.

This sequence belongs to the guanylate kinase family.

The protein localises to the cytoplasm. It catalyses the reaction GMP + ATP = GDP + ADP. The catalysed reaction is dZMP + ATP = dZDP + ADP. It participates in purine metabolism. Essential for recycling GMP and indirectly, cGMP. In terms of biological role, (Microbial infection) Catalyzes the phosphorylation of dZMP to dZDP, when the bacterium is infected by a phage that produces the substrate for the synthesis of dZTP (2- amino-2'-deoxyadenosine 5'-triphosphate), which is then used by the phage as a DNA polymerase substrate. This is Guanylate kinase from Synechococcus elongatus (strain ATCC 33912 / PCC 7942 / FACHB-805) (Anacystis nidulans R2).